A 200-amino-acid chain; its full sequence is NAD(P)H dehydrogenase (quinone) (200 aa).

Positions 4–191 (VLVLYYSSYG…DIARYQGKHV (188 aa)) constitute a Flavodoxin-like domain. Residues 10-15 (SSYGHV) and 79-81 (TRF) each bind FMN. Residue Tyr-12 coordinates NAD(+). Trp-99 serves as a coordination point for substrate. Residues 114-120 (STGTQHG) and His-135 contribute to the FMN site.

Belongs to the WrbA family. Requires FMN as cofactor.

The enzyme catalyses a quinone + NADH + H(+) = a quinol + NAD(+). The catalysed reaction is a quinone + NADPH + H(+) = a quinol + NADP(+). This Burkholderia cenocepacia (strain HI2424) protein is NAD(P)H dehydrogenase (quinone).